A 516-amino-acid chain; its full sequence is AMP phosphorylase (516 aa).

Residues Gly169, 195–200, and Thr204 each bind AMP; that span reads SRAITG. Asp257 (proton donor) is an active-site residue. AMP is bound by residues Ser265 and Lys289.

The protein belongs to the thymidine/pyrimidine-nucleoside phosphorylase family. Type 2 subfamily.

The enzyme catalyses AMP + phosphate = alpha-D-ribose 1,5-bisphosphate + adenine. The catalysed reaction is CMP + phosphate = cytosine + alpha-D-ribose 1,5-bisphosphate. It catalyses the reaction UMP + phosphate = alpha-D-ribose 1,5-bisphosphate + uracil. Its function is as follows. Catalyzes the conversion of AMP and phosphate to adenine and ribose 1,5-bisphosphate (R15P). Exhibits phosphorylase activity toward CMP and UMP in addition to AMP. Functions in an archaeal AMP degradation pathway, together with R15P isomerase and RubisCO. In Methanospirillum hungatei JF-1 (strain ATCC 27890 / DSM 864 / NBRC 100397 / JF-1), this protein is AMP phosphorylase.